Consider the following 374-residue polypeptide: Serpin B8 (374 aa).

It belongs to the serpin family. Ov-serpin subfamily.

It localises to the cytoplasm. In terms of biological role, has an important role in epithelial desmosome-mediated cell-cell adhesion. The chain is Serpin B8 (SERPINB8) from Homo sapiens (Human).